Reading from the N-terminus, the 401-residue chain is Type 3 secretion system translocon protein SctE (401 aa).

The stretch at 129–160 forms a coiled coil; it reads IQRLHEQNMKKIEENQEKIKETEENAKQVKKS. 2 consecutive transmembrane segments (helical) span residues 176-196 and 224-244; these read VIVG…AMMV and ILGP…TVMT. The stretch at 345 to 379 forms a coiled coil; the sequence is LALNKADMAALQSIIDRLKEELSHLSESHQQVMEL.

The protein belongs to the SctE/SipB/YopB family. As to quaternary structure, the core secretion machinery of the T3SS is composed of approximately 20 different proteins, including cytoplasmic components, a base, an export apparatus and a needle. This subunit is involved in the formation of a pore, called the translocon, in host membrane. Interacts with YopD/SctB. Together with YopD/SctB, forms a multimeric integral membrane complex.

The protein localises to the secreted. The protein resides in the host membrane. Component of the type III secretion system (T3SS), also called injectisome, which is used to inject bacterial effector proteins into eukaryotic host cells. YopB/SctE and YopD/SctB are inserted into the host membrane where they form a pore and allow the translocation of effector proteins into the cytosol of target cells. Is an essential virulence determinant. Required for YopE and YopH translocation. Shows membrane disruptive activity in vitro. In terms of biological role, interaction with the host cell triggers a signaling response, via activation of the small GTPase Ras, the MAPK kinases ERK and JNK and the nuclear factor NF-kappa-B pathways, and production of the proinflammatory cytokine interleukin-8 (IL-8). YopB/SctE-dependent signaling response is counteracted by YopE, YopH and YopJ in infected host cells. YopB/SctE is directly responsible for signaling and its insertion in the membrane is important to activate the signaling response in the host cell. This is Type 3 secretion system translocon protein SctE from Yersinia pseudotuberculosis serotype I (strain IP32953).